Reading from the N-terminus, the 269-residue chain is Shikimate dehydrogenase (NADP(+)) (269 aa).

Residues 14–16 (SKS) and threonine 61 each bind shikimate. Residue lysine 65 is the Proton acceptor of the active site. Residue glutamate 77 participates in NADP(+) binding. The shikimate site is built by asparagine 86 and aspartate 102. Residues 126 to 130 (GAGGA), 149 to 154 (NRTLSK), and methionine 213 each bind NADP(+). Tyrosine 215 is a binding site for shikimate. Glycine 238 serves as a coordination point for NADP(+).

It belongs to the shikimate dehydrogenase family. As to quaternary structure, homodimer.

The enzyme catalyses shikimate + NADP(+) = 3-dehydroshikimate + NADPH + H(+). It participates in metabolic intermediate biosynthesis; chorismate biosynthesis; chorismate from D-erythrose 4-phosphate and phosphoenolpyruvate: step 4/7. Functionally, involved in the biosynthesis of the chorismate, which leads to the biosynthesis of aromatic amino acids. Catalyzes the reversible NADPH linked reduction of 3-dehydroshikimate (DHSA) to yield shikimate (SA). The polypeptide is Shikimate dehydrogenase (NADP(+)) (Pasteurella multocida (strain Pm70)).